Consider the following 349-residue polypeptide: Protein-glutamate methylesterase/protein-glutamine glutaminase 2 (349 aa).

Residues 4-121 (SVLVVDDSAL…AEGMQAYAEE (118 aa)) enclose the Response regulatory domain. Asp-55 carries the post-translational modification 4-aspartylphosphate. A CheB-type methylesterase domain is found at 151-343 (LLSTEKIIAL…AALLQQAARR (193 aa)). Active-site residues include Ser-163, His-189, and Asp-285.

This sequence belongs to the CheB family. In terms of assembly, interacts with the C-terminal pentapeptide GWEEF of McpB. Post-translationally, phosphorylated by CheA. Phosphorylation of the N-terminal regulatory domain activates the methylesterase activity.

The protein localises to the cytoplasm. It carries out the reaction [protein]-L-glutamate 5-O-methyl ester + H2O = L-glutamyl-[protein] + methanol + H(+). It catalyses the reaction L-glutaminyl-[protein] + H2O = L-glutamyl-[protein] + NH4(+). Functionally, involved in chemotaxis. Part of a chemotaxis signal transduction system that modulates chemotaxis in response to various stimuli. Catalyzes the demethylation of specific methylglutamate residues introduced into the chemoreceptors (methyl-accepting chemotaxis proteins or MCP) by CheR. Also mediates the irreversible deamidation of specific glutamine residues to glutamic acid. Acts on the methyl-accepting chemotaxis protein McpB. May be involved in a specific chemotactic response, which takes place during infection and is required for P.aeruginosa pathogenicity. This is Protein-glutamate methylesterase/protein-glutamine glutaminase 2 from Pseudomonas aeruginosa (strain ATCC 15692 / DSM 22644 / CIP 104116 / JCM 14847 / LMG 12228 / 1C / PRS 101 / PAO1).